Here is a 235-residue protein sequence, read N- to C-terminus: FsC-acetyl coenzyme A-N(2)-transacetylase (235 aa).

Residues 14–190 (LELVPLGHEH…RYSITREEWL (177 aa)) form the N-acetyltransferase domain. Residues 106–108 (FRV), Gly-114, Asn-146, and 151–153 (AVM) each bind CoA.

The protein operates within siderophore biosynthesis. Functionally, fsC-acetyl coenzyme A-N(2)-transacetylase; part of the siderophore biosynthetic pathway. Aspergillus fumigatus produces 4 types of siderophores, low-molecular-mass iron chelators, including excreted fusarinine C (FsC) and triacetylfusarinine C (TAFC) for iron uptake and intacellular ferricrocin (FC) for hyphal and hydroxyferricrocin (HFC) for conidial iron distribution and storage. TAFC consists of 3 N(2)-acetyl-N(5)-anhydromevalonyl-N(5)-hydroxyornithine residues cyclically linked by ester bonds; FC is a cyclic hexapeptide with the structure Gly-Ser-Gly-(N(5)-acetyl-N(5)-hydroxyornithine)x3. The biosynthesis of all four siderophores depends on the hydroxylation of ornithine, catalyzed by the monooxygenase sidA. Subsequently, the pathways for biosynthesis of extra- and intracellular siderophores split. For biosynthesis of extracellular siderophores, the transacylase sidF transfers anhydromevalonyl to N(5)-hydroxyornithine. The required anhydromevalonyl-CoA moiety is derived from mevalonate by CoA ligation and dehydration catalyzed by sidI and sidH respectively. The acetylation of N(5)-hydroxyornithine for FC biosynthesis involves the constitutively expressed sidL. FC is hydroxylated to HFC by an as yet uncharacterized enzyme during conidiation. Assembly of fusarinine C (FsC) and FC is catalyzed by two different nonribosomal peptide synthetases (NRPS), sidD and sidC respectively. Subsequently, sidG catalyzes N2-acetylation of FsC for forming TAFC. Both extra- and intracellular siderophores are crucial for growth during iron limitation and virulence. The polypeptide is FsC-acetyl coenzyme A-N(2)-transacetylase (Aspergillus fumigatus (strain ATCC MYA-4609 / CBS 101355 / FGSC A1100 / Af293) (Neosartorya fumigata)).